The sequence spans 653 residues: MASDSRRGTGSPKMKGRENAKDTLCRNVTIYGRCRYEDKGCVYNHDPNKTNSAYQSDSKRRLNVDSPSFTPSLLSSNGSSPTSSSATLKKTTTISPKAANAAPFQPRGISSRSNASTPSARAESAAPDWSVAEVQEFVPQGFETSHMASLQGNGNGPVPSTSPFDPFVTTSNPLAAANAVGPVQANPFSPDTAAAALGGATFFTGQTGFQPVQYHLYAPIGPHSQNTLGYQRNVHDLFLPNDFREELQKKAAATLQTLPNTQLPAQVDYFHSLVPLDLNHQKNATIFGFPSWVYKAQSSKDGNFYALRRLEGFRLTNEKAIRSVQAWKRVCNGSVVTVHDAFTSRSFQDSSLIFVTDYHPLSKTLAEQHLSAGNRFQGRSNTHIPEQVLWGYMTQIANALKAIHSNGLAAKIIDPSKILLTGRNRIRLNACAIMDVVQFDTQRSIADLQHQDLVSFGQLIVTLGANSPSVMHNPTKAMEHFTRAYSPQMKNSVFWLLNSMQKDQDHTIDIFITGISSQLMSTFDSALHMDDQLTSDLSRELENGRLVRLMTKLNFINERPEYEHDRQWSENGERYFLKIFRDYVFHQVDAHGDPVVDLGHVLACLNKLDAGSDEKITLVSRDEQSCFIVSYKEIKKALESSFQALLKPTRRVH.

2 disordered regions span residues M1–K21 and H45–D128. Residues N19–N48 form a C3H1-type zinc finger. The span at S68–S95 shows a compositional bias: low complexity. A compositionally biased stretch (polar residues) spans G108 to S119. The segment at Q256–S516 is pseudokinase domain. Residues R308, D357–T364, and S416–K417 contribute to the ATP site. Residues S517 to F555 adopt a coiled-coil conformation. Residues I556–H653 form a knob domain region.

It belongs to the protein kinase superfamily. PAN3 family. Homodimer. Forms a heterotrimer with a catalytic subunit pan2 to form the poly(A)-nuclease (PAN) deadenylation complex. Interacts (via PAM-2 motif) with poly(A)-binding protein pab1 (via PABC domain), conferring substrate specificity of the enzyme complex.

It localises to the cytoplasm. In terms of biological role, regulatory subunit of the poly(A)-nuclease (PAN) deadenylation complex, one of two cytoplasmic mRNA deadenylases involved in mRNA turnover. PAN specifically shortens poly(A) tails of RNA and the activity is stimulated by poly(A)-binding protein pab1. PAN deadenylation is followed by rapid degradation of the shortened mRNA tails by the CCR4-NOT complex. Deadenylated mRNAs are then degraded by two alternative mechanisms, namely exosome-mediated 3'-5' exonucleolytic degradation, or deadenylation-dependent mRNA decaping and subsequent 5'-3' exonucleolytic degradation by xrn1. May also be involved in post-transcriptional maturation of mRNA poly(A) tails. pan3 acts as a positive regulator for PAN activity, recruiting the catalytic subunit pan2 to mRNA via its interaction with RNA and with pab1. The chain is PAN2-PAN3 deadenylation complex subunit PAN3 from Aspergillus terreus (strain NIH 2624 / FGSC A1156).